Here is a 632-residue protein sequence, read N- to C-terminus: Asparagine synthetase [glutamine-hydrolyzing] 1 (632 aa).

C2 functions as the For GATase activity in the catalytic mechanism. Residues 2-214 (CGFVGVFNKH…PGSQFTIRPD (213 aa)) form the Glutamine amidotransferase type-2 domain. L-glutamine contacts are provided by residues 52–56 (RLSII), 77–79 (NGE), and D102. ATP-binding positions include V288 and 361–362 (SG).

It belongs to the asparagine synthetase family.

The catalysed reaction is L-aspartate + L-glutamine + ATP + H2O = L-asparagine + L-glutamate + AMP + diphosphate + H(+). It participates in amino-acid biosynthesis; L-asparagine biosynthesis; L-asparagine from L-aspartate (L-Gln route): step 1/1. Functionally, main asparagine synthetase in vegetative cells. This Bacillus subtilis (strain 168) protein is Asparagine synthetase [glutamine-hydrolyzing] 1 (asnB).